Consider the following 359-residue polypeptide: Fructose-bisphosphate aldolase class 2 (359 aa).

S61 contacts D-glyceraldehyde 3-phosphate. The active-site Proton donor is the D110. 4 residues coordinate Zn(2+): H111, D145, E175, and H227. Dihydroxyacetone phosphate is bound at residue G228. H265 lines the Zn(2+) pocket. Dihydroxyacetone phosphate contacts are provided by residues 266-268 (GGS) and 287-290 (NIDT).

It belongs to the class II fructose-bisphosphate aldolase family. Zn(2+) serves as cofactor.

It catalyses the reaction beta-D-fructose 1,6-bisphosphate = D-glyceraldehyde 3-phosphate + dihydroxyacetone phosphate. The protein operates within carbohydrate degradation; glycolysis; D-glyceraldehyde 3-phosphate and glycerone phosphate from D-glucose: step 4/4. In terms of biological role, catalyzes the aldol condensation of dihydroxyacetone phosphate (DHAP or glycerone-phosphate) with glyceraldehyde 3-phosphate (G3P) to form fructose 1,6-bisphosphate (FBP) in gluconeogenesis and the reverse reaction in glycolysis. This is Fructose-bisphosphate aldolase class 2 (fbaA) from Buchnera aphidicola subsp. Schizaphis graminum (strain Sg).